Here is an 831-residue protein sequence, read N- to C-terminus: Isethionate sulfite-lyase (831 aa).

The PFL domain occupies 32-701 (PRVFRLLERF…VVSATPNGRT (670 aa)). 2-hydroxyethane-1-sulfonate contacts are provided by residues R189, Q193, 468–470 (CTE), and R679. The active-site Cysteine radical intermediate is C468. E470 acts as the Proton acceptor in catalysis. The region spanning 708 to 831 (DGSSASHGAD…LIARTEHDVM (124 aa)) is the Glycine radical domain. The residue at position 806 (G806) is a Glycine radical.

Belongs to the glycyl radical enzyme (GRE) family. Homodimer. Requires the activating protein IslB to generate the key active site glycyl radical on Gly-806 that is involved in catalysis.

The catalysed reaction is 2-hydroxyethane-1-sulfonate = acetaldehyde + sulfite + H(+). Its pathway is organosulfur degradation; alkanesulfonate degradation. Functionally, involved in an anaerobic respiration pathway that converts the sulfonate isethionate (2-hydroxyethanesulfonate) to ammonia, acetate and sulfide. Catalyzes the radical-mediated C-S bond cleavage of isethionate (2-hydroxyethanesulfonate) to form sulfite and acetaldehyde. This Desulfovibrio desulfuricans (strain ATCC 27774 / DSM 6949 / MB) protein is Isethionate sulfite-lyase.